Reading from the N-terminus, the 221-residue chain is Thiopurine S-methyltransferase (221 aa).

Residues Trp12, Leu47, Glu68, and Arg125 each coordinate S-adenosyl-L-methionine.

It belongs to the class I-like SAM-binding methyltransferase superfamily. TPMT family.

The protein resides in the cytoplasm. It carries out the reaction S-adenosyl-L-methionine + a thiopurine = S-adenosyl-L-homocysteine + a thiopurine S-methylether.. This is Thiopurine S-methyltransferase from Legionella pneumophila subsp. pneumophila (strain Philadelphia 1 / ATCC 33152 / DSM 7513).